A 246-amino-acid polypeptide reads, in one-letter code: Small ribosomal subunit protein uS2 (246 aa).

It belongs to the universal ribosomal protein uS2 family.

The chain is Small ribosomal subunit protein uS2 from Pseudomonas paraeruginosa (strain DSM 24068 / PA7) (Pseudomonas aeruginosa (strain PA7)).